A 363-amino-acid chain; its full sequence is Chorismate synthase (363 aa).

NADP(+)-binding residues include arginine 48 and arginine 54. FMN is bound by residues 125-127, 237-238, glycine 277, 292-296, and arginine 318; these read RSS, NA, and KPTSS.

This sequence belongs to the chorismate synthase family. Homotetramer. Requires FMNH2 as cofactor.

The enzyme catalyses 5-O-(1-carboxyvinyl)-3-phosphoshikimate = chorismate + phosphate. It participates in metabolic intermediate biosynthesis; chorismate biosynthesis; chorismate from D-erythrose 4-phosphate and phosphoenolpyruvate: step 7/7. Catalyzes the anti-1,4-elimination of the C-3 phosphate and the C-6 proR hydrogen from 5-enolpyruvylshikimate-3-phosphate (EPSP) to yield chorismate, which is the branch point compound that serves as the starting substrate for the three terminal pathways of aromatic amino acid biosynthesis. This reaction introduces a second double bond into the aromatic ring system. The polypeptide is Chorismate synthase (Pseudomonas fluorescens (strain Pf0-1)).